A 156-amino-acid chain; its full sequence is ATP synthase subunit b (156 aa).

A helical membrane pass occupies residues 5 to 27 (ITLIGQMITFAIFIGFTMKFVWP).

It belongs to the ATPase B chain family. In terms of assembly, F-type ATPases have 2 components, F(1) - the catalytic core - and F(0) - the membrane proton channel. F(1) has five subunits: alpha(3), beta(3), gamma(1), delta(1), epsilon(1). F(0) has three main subunits: a(1), b(2) and c(10-14). The alpha and beta chains form an alternating ring which encloses part of the gamma chain. F(1) is attached to F(0) by a central stalk formed by the gamma and epsilon chains, while a peripheral stalk is formed by the delta and b chains.

It is found in the cell inner membrane. F(1)F(0) ATP synthase produces ATP from ADP in the presence of a proton or sodium gradient. F-type ATPases consist of two structural domains, F(1) containing the extramembraneous catalytic core and F(0) containing the membrane proton channel, linked together by a central stalk and a peripheral stalk. During catalysis, ATP synthesis in the catalytic domain of F(1) is coupled via a rotary mechanism of the central stalk subunits to proton translocation. In terms of biological role, component of the F(0) channel, it forms part of the peripheral stalk, linking F(1) to F(0). This Francisella tularensis subsp. holarctica (strain OSU18) protein is ATP synthase subunit b.